Consider the following 280-residue polypeptide: UPF0494 membrane protein C750.06c (280 aa).

4 helical membrane passes run 107–127, 144–164, 178–198, and 199–219; these read WPLLIIWSIIIVFAVDKKFEV, IWVPIAIYVCLLVLMLLSLIF, VIIAVLGAVLGMIIAVLGMII, and AALGMIIAALGATITGLLYFG.

This sequence belongs to the UPF0494 family.

It is found in the cytoplasm. It localises to the vacuole. Its subcellular location is the membrane. This is UPF0494 membrane protein C750.06c from Schizosaccharomyces pombe (strain 972 / ATCC 24843) (Fission yeast).